A 1392-amino-acid polypeptide reads, in one-letter code: DNA-directed RNA polymerase subunit beta (1392 aa).

The protein belongs to the RNA polymerase beta chain family. As to quaternary structure, the RNAP catalytic core consists of 2 alpha, 1 beta, 1 beta' and 1 omega subunit. When a sigma factor is associated with the core the holoenzyme is formed, which can initiate transcription.

The enzyme catalyses RNA(n) + a ribonucleoside 5'-triphosphate = RNA(n+1) + diphosphate. Functionally, DNA-dependent RNA polymerase catalyzes the transcription of DNA into RNA using the four ribonucleoside triphosphates as substrates. This chain is DNA-directed RNA polymerase subunit beta, found in Neisseria meningitidis serogroup A / serotype 4A (strain DSM 15465 / Z2491).